Here is a 310-residue protein sequence, read N- to C-terminus: Major allergen Asp f 2 (310 aa).

A signal peptide spans Met-1–Pro-16. Residues Asn-57, Asn-87, Asn-143, and Asn-216 are each glycosylated (N-linked (GlcNAc...) asparagine). The segment at Ala-247 to Thr-310 is disordered. Low complexity predominate over residues Asp-258 to Thr-292. Basic and acidic residues predominate over residues His-300–Thr-310.

It belongs to the ZPS1 family.

The protein localises to the secreted. The chain is Major allergen Asp f 2 from Aspergillus fumigatus (strain ATCC MYA-4609 / CBS 101355 / FGSC A1100 / Af293) (Neosartorya fumigata).